Consider the following 490-residue polypeptide: Betaine aldehyde dehydrogenase (490 aa).

The K(+) site is built by I27 and D93. G150–W152 lines the NAD(+) pocket. The active-site Charge relay system is K162. NAD(+) is bound at residue K176–E179. Residue V180 participates in K(+) binding. G230 to T233 provides a ligand contact to NAD(+). L246 contributes to the K(+) binding site. The Proton acceptor role is filled by E252. 3 residues coordinate NAD(+): G254, C286, and E387. C286 (nucleophile) is an active-site residue. C286 carries the post-translational modification Cysteine sulfenic acid (-SOH). 2 residues coordinate K(+): K457 and G460. The active-site Charge relay system is the E464.

It belongs to the aldehyde dehydrogenase family. In terms of assembly, dimer of dimers. K(+) is required as a cofactor.

It carries out the reaction betaine aldehyde + NAD(+) + H2O = glycine betaine + NADH + 2 H(+). Its pathway is amine and polyamine biosynthesis; betaine biosynthesis via choline pathway; betaine from betaine aldehyde: step 1/1. Its function is as follows. Involved in the biosynthesis of the osmoprotectant glycine betaine. Catalyzes the irreversible oxidation of betaine aldehyde to the corresponding acid. This chain is Betaine aldehyde dehydrogenase, found in Pseudomonas fluorescens (strain ATCC BAA-477 / NRRL B-23932 / Pf-5).